The primary structure comprises 302 residues: Glutaminase (302 aa).

Residues Ser-61, Asn-111, Glu-155, Asn-162, Tyr-186, Tyr-238, and Val-256 each contribute to the substrate site.

Belongs to the glutaminase family. As to quaternary structure, homotetramer.

The catalysed reaction is L-glutamine + H2O = L-glutamate + NH4(+). The polypeptide is Glutaminase (Pseudomonas putida (strain ATCC 700007 / DSM 6899 / JCM 31910 / BCRC 17059 / LMG 24140 / F1)).